An 841-amino-acid chain; its full sequence is MLGILNKMFDPTKRALNKYEKIANDIDAVRGDYENLSDEALKHKTAEFKERLEKGETTDDLLVEAFAVVREASRRVTGMFPFKVQLMGGIALHEGNISEMKTGEGKTLTSTLPVYLNALTGKGVHVVTVNEYLASRDAQQMGEIFAFLGLTVGLNLNSMSKDEKREAYAADITYSTNNELGFDYLRDNMVLYKEQMVQRPLHFAVIDEVDSILVDEARTPLIISGQAQKSTKLYVQANAFVRTLKKDQDYTYDVKTKGVQLTEEGMTKAEKTFGIDNLFDVKNVALNHHINQALKAHAAMQKDVDYVVEDGQVVIVDSFTGRLMKGRRYSEGLHQAIEAKEGLEIQNESMTLATITFQNYFRMYEKLAGMTGTAKTEEEEFRNIYNMQVVSIPTNQPVIRDDRPDLIYRSMEGKFKAVAEDVAQRYMTGQPVLVGTVAVETSELISKLLKNKGIPHQVLNAKNHEREAQIIEEAGQKGAVTIATNMAGRGTDIKLGEGVKELGGLAVVGTERHESRRIDNQLRGRSGRQGDPGITQFYLSMEDELMRRFGAERTMAMLDRFGMDDSTPIQSKMVSRAVESSQKRVEGNNFDSRKQLLQYDDVLRQQREVIYKQRFEVIDSENLRDIVEGMIKSSLERAIAAYTPKEELPEEWNLDGLVELVNSTYLDEGALEKSDIFGKEPDEMHEMIMDRIMTKYNEKEENFGTEQMREFEKVIVLRAVDSKWMDHIDAMDQLRQGIHLRAYAQTNPLREYQMEGFAMFEHMIESIEDEVAKFVMKAEIESNLEREEVVQGQTTAHQPQDGDEAKQAKKAPVRKVVDIGRNAPCHCGSGKKYKNCCGRTE.

ATP contacts are provided by residues Q85, 103–107 (GEGKT), and D492. Positions 786–812 (REEVVQGQTTAHQPQDGDEAKQAKKAP) are disordered. Residues C825, C827, C836, and C837 each contribute to the Zn(2+) site.

This sequence belongs to the SecA family. Monomer and homodimer. Part of the essential Sec protein translocation apparatus which comprises SecA, SecYEG and auxiliary proteins SecDF. Other proteins may also be involved. Zn(2+) is required as a cofactor.

It is found in the cell membrane. The protein localises to the cytoplasm. It catalyses the reaction ATP + H2O + cellular proteinSide 1 = ADP + phosphate + cellular proteinSide 2.. In terms of biological role, part of the Sec protein translocase complex. Interacts with the SecYEG preprotein conducting channel. Has a central role in coupling the hydrolysis of ATP to the transfer of proteins into and across the cell membrane, serving as an ATP-driven molecular motor driving the stepwise translocation of polypeptide chains across the membrane. This Bacillus velezensis (strain DSM 23117 / BGSC 10A6 / LMG 26770 / FZB42) (Bacillus amyloliquefaciens subsp. plantarum) protein is Protein translocase subunit SecA.